A 259-amino-acid polypeptide reads, in one-letter code: Thiazole synthase (259 aa).

Lys-95 serves as the catalytic Schiff-base intermediate with DXP. Residues Gly-156, 182-183 (AG), and 204-205 (NT) contribute to the 1-deoxy-D-xylulose 5-phosphate site.

This sequence belongs to the ThiG family. As to quaternary structure, homotetramer. Forms heterodimers with either ThiH or ThiS.

Its subcellular location is the cytoplasm. The enzyme catalyses [ThiS sulfur-carrier protein]-C-terminal-Gly-aminoethanethioate + 2-iminoacetate + 1-deoxy-D-xylulose 5-phosphate = [ThiS sulfur-carrier protein]-C-terminal Gly-Gly + 2-[(2R,5Z)-2-carboxy-4-methylthiazol-5(2H)-ylidene]ethyl phosphate + 2 H2O + H(+). It functions in the pathway cofactor biosynthesis; thiamine diphosphate biosynthesis. Functionally, catalyzes the rearrangement of 1-deoxy-D-xylulose 5-phosphate (DXP) to produce the thiazole phosphate moiety of thiamine. Sulfur is provided by the thiocarboxylate moiety of the carrier protein ThiS. In vitro, sulfur can be provided by H(2)S. The chain is Thiazole synthase from Serratia proteamaculans (strain 568).